Reading from the N-terminus, the 262-residue chain is Small ribosomal subunit protein eS4y (262 aa).

In terms of domain architecture, S4 RNA-binding spans 42 to 104 (LPLVLIIRNR…TNENFRLLYD (63 aa)).

This sequence belongs to the eukaryotic ribosomal protein eS4 family.

Its subcellular location is the cytoplasm. The protein is Small ribosomal subunit protein eS4y (RPS4B) of Arabidopsis thaliana (Mouse-ear cress).